The following is a 150-amino-acid chain: Urease accessory protein UreE (150 aa).

It belongs to the UreE family.

It localises to the cytoplasm. In terms of biological role, involved in urease metallocenter assembly. Binds nickel. Probably functions as a nickel donor during metallocenter assembly. This Streptococcus vestibularis protein is Urease accessory protein UreE.